Here is a 609-residue protein sequence, read N- to C-terminus: ATP-dependent lipid A-core flippase (609 aa).

6 helical membrane passes run leucine 47–isoleucine 67, isoleucine 88–phenylalanine 108, alanine 167–valine 187, tryptophan 190–isoleucine 210, valine 279–glycine 299, and glycine 305–leucine 325. In terms of domain architecture, ABC transmembrane type-1 spans leucine 47–lysine 340. Residues valine 372–serine 606 enclose the ABC transporter domain. Glycine 404 to threonine 411 contributes to the ATP binding site.

It belongs to the ABC transporter superfamily. Lipid exporter (TC 3.A.1.106) family. As to quaternary structure, homodimer.

The protein localises to the cell inner membrane. It carries out the reaction ATP + H2O + lipid A-core oligosaccharideSide 1 = ADP + phosphate + lipid A-core oligosaccharideSide 2.. Its function is as follows. Involved in lipopolysaccharide (LPS) biosynthesis. Translocates lipid A-core from the inner to the outer leaflet of the inner membrane. Transmembrane domains (TMD) form a pore in the inner membrane and the ATP-binding domain (NBD) is responsible for energy generation. The sequence is that of ATP-dependent lipid A-core flippase from Francisella tularensis subsp. tularensis (strain FSC 198).